A 412-amino-acid polypeptide reads, in one-letter code: DNA polymerase IV 2 (412 aa).

One can recognise a UmuC domain in the interval 7–192 (IFLVDMQSFY…LPVGSMFGVG (186 aa)). Mg(2+) is bound by residues Asp-11 and Asp-107. Residue Glu-108 is part of the active site.

It belongs to the DNA polymerase type-Y family. Monomer. Requires Mg(2+) as cofactor.

Its subcellular location is the cytoplasm. It catalyses the reaction DNA(n) + a 2'-deoxyribonucleoside 5'-triphosphate = DNA(n+1) + diphosphate. In terms of biological role, poorly processive, error-prone DNA polymerase involved in untargeted mutagenesis. Copies undamaged DNA at stalled replication forks, which arise in vivo from mismatched or misaligned primer ends. These misaligned primers can be extended by PolIV. Exhibits no 3'-5' exonuclease (proofreading) activity. May be involved in translesion synthesis (TSL), in conjunction with the beta clamp from PolIII. This Bacillus subtilis (strain 168) protein is DNA polymerase IV 2 (dinB2).